Consider the following 805-residue polypeptide: Phenylalanine--tRNA ligase beta subunit (805 aa).

A tRNA-binding domain is found at 39–148 (APPFTGVVVA…AALRPGTDIR (110 aa)). The 76-residue stretch at 399–474 (PVREPVRMRL…RVYGFERIPD (76 aa)) folds into the B5 domain. Mg(2+)-binding residues include Asp452, Asp458, Glu461, and Glu462. Residues 703–804 (SRQPAVVRDL…LVAAHNARQR (102 aa)) form the FDX-ACB domain.

It belongs to the phenylalanyl-tRNA synthetase beta subunit family. Type 1 subfamily. As to quaternary structure, tetramer of two alpha and two beta subunits. Mg(2+) serves as cofactor.

Its subcellular location is the cytoplasm. It catalyses the reaction tRNA(Phe) + L-phenylalanine + ATP = L-phenylalanyl-tRNA(Phe) + AMP + diphosphate + H(+). This is Phenylalanine--tRNA ligase beta subunit from Bordetella bronchiseptica (strain ATCC BAA-588 / NCTC 13252 / RB50) (Alcaligenes bronchisepticus).